Here is a 4662-residue protein sequence, read N- to C-terminus: Protein PF3D7_1417600 (4662 aa).

The next 2 membrane-spanning stretches (helical) occupy residues 136–156 (INYVFLQIIYNIILYFVYLYI) and 161–181 (YIYYILRTYLFLLLYNSFHII). An LRR 1 repeat occupies 466 to 489 (IKNIDSINKNHKRLIKISNYNITN). The disordered stretch occupies residues 583 to 710 (YRNDGDVNNK…KMKPDNTLNE (128 aa)). Positions 590 to 644 (NNKNGYNNNEHSNSSNERSNNNGDNNNNNHNNNNHNNNHHNNGSNNHNGNNNSNN) are enriched in low complexity. Basic and acidic residues predominate over residues 650–666 (DDDKKGNDKKNEDKDDE). Positions 690–701 (KKRKEKSKNKNK) are enriched in basic residues. The 74-residue stretch at 783–856 (YKPTEPVNIF…ISNDIKMFWF (74 aa)) folds into the HSA domain. The disordered stretch occupies residues 942 to 967 (GLMNKMSHQNGKNNNHNDYNNKCEDN). Residues 1150–1172 (NVHINHIQYDDNNLYYNDDLYNY) form an LRR 2 repeat. The span at 1505 to 1524 (NNNNNSNNNNSNSNNNSNSN) shows a compositional bias: low complexity. Disordered regions lie at residues 1505 to 1540 (NNNNNSNNNNSNSNNNSNSNIKTKESVSTTNHNNSS) and 1705 to 1761 (KINS…NEKD). Basic and acidic residues predominate over residues 1710-1761 (NNDKSDDKNDDKNDKKNDGKNDKNDEKDDNKTGEKGDNKIGEKDDNKINEKD). 2 LRR repeats span residues 2063 to 2086 (ITKVKFLPLFSSNNVNKLIGMFNK) and 2129 to 2153 (DEEINILNKNDDKINEYKDELNVKD). The tract at residues 2228-2261 (KNKSNKKKRAKKNIKLGEEENESECNNEGECNNE) is disordered. Positions 2230–2241 (KSNKKKRAKKNI) are enriched in basic residues. The segment covering 2246–2261 (EENESECNNEGECNNE) has biased composition (acidic residues). LRR repeat units follow at residues 2672–2695 (LDKLKNFPINESIESSKNNNKTID), 2773–2796 (NTVLKDTIIESNEISCIVDKTVDI), 2864–2888 (INDDNKMNNFVNNNITHINNNVNNN), and 2904–2929 (ANNINNLNVNHLNNNISQINNNYNNS). The interval 2956 to 2975 (MNNTKQRSHSSYHTSFPMQN) is disordered. LRR repeat units lie at residues 3377–3400 (QNNMNTINMNNINMNNINMNNITM), 3438–3461 (NNSMNNINISNNINYNISNNYNNS), 3756–3781 (SQRLQNIHLGNQQNDIQHMNLDNINN), 3935–3960 (QPNINNVGMNQPNINNVGMNQPNINN), 3965–3985 (QPNINNVGMNQPNINNVSMNQ), and 3986–4010 (PNINNVNMNQPNINNVSMNQPNINN). Residues 4203 to 4272 (DMNQQERLQQ…ERLQQKWEQQ (70 aa)) adopt a coiled-coil conformation. LRR repeat units lie at residues 4296 to 4321 (YQELNNHTLQENTIAKDSMRQHIFLK) and 4333 to 4357 (QKMHSHQLQTEKMKTQQLSAHSLQQ). The segment at 4384-4412 (QMNHQQINKHQMNQQQMNKQQMNQQQINQ) is disordered.

The protein resides in the membrane. The protein is Protein PF3D7_1417600 of Plasmodium falciparum (isolate 3D7).